Consider the following 205-residue polypeptide: Large ribosomal subunit protein bL17c (205 aa).

A chloroplast-targeting transit peptide spans 1–89 (MASASTTWSM…VIDNGGRVFA (89 aa)).

This sequence belongs to the bacterial ribosomal protein bL17 family. Part of the 50S ribosomal subunit.

Its subcellular location is the plastid. The protein resides in the chloroplast. Functionally, this protein binds directly to 23S ribosomal RNA. The chain is Large ribosomal subunit protein bL17c (RPL17) from Nicotiana tabacum (Common tobacco).